The sequence spans 427 residues: Adenylosuccinate synthetase (427 aa).

GTP is bound by residues 12–18 (GDEGKGK) and 40–42 (GHT). The active-site Proton acceptor is Asp-13. Mg(2+) contacts are provided by Asp-13 and Gly-40. Residues 13-16 (DEGK), 38-41 (NAGH), Thr-128, Arg-142, Gln-223, Thr-238, and Arg-302 each bind IMP. The active-site Proton donor is the His-41. Substrate is bound at residue 298–304 (TTTGRAR). Residues Arg-304, 330 to 332 (KLD), and 412 to 414 (AVG) each bind GTP.

The protein belongs to the adenylosuccinate synthetase family. Homodimer. Mg(2+) is required as a cofactor.

It is found in the cytoplasm. The catalysed reaction is IMP + L-aspartate + GTP = N(6)-(1,2-dicarboxyethyl)-AMP + GDP + phosphate + 2 H(+). The protein operates within purine metabolism; AMP biosynthesis via de novo pathway; AMP from IMP: step 1/2. Plays an important role in the de novo pathway of purine nucleotide biosynthesis. Catalyzes the first committed step in the biosynthesis of AMP from IMP. This Desulfitobacterium hafniense (strain Y51) protein is Adenylosuccinate synthetase.